Reading from the N-terminus, the 342-residue chain is Dihydroorotate dehydrogenase (quinone) (342 aa).

FMN-binding positions include 61–65 and Thr85; that span reads AGLDK. Lys65 serves as a coordination point for substrate. A substrate-binding site is contributed by 110-114; the sequence is NRMGF. FMN is bound by residues Asn138 and Asn171. Asn171 is a substrate binding site. Catalysis depends on Ser174, which acts as the Nucleophile. Residue Asn176 participates in substrate binding. FMN is bound by residues Lys216 and Thr244. Substrate is bound at residue 245 to 246; that stretch reads NT. Residues Gly267, Gly296, and 317-318 contribute to the FMN site; that span reads YS.

Belongs to the dihydroorotate dehydrogenase family. Type 2 subfamily. As to quaternary structure, monomer. FMN is required as a cofactor.

The protein resides in the cell membrane. It carries out the reaction (S)-dihydroorotate + a quinone = orotate + a quinol. It functions in the pathway pyrimidine metabolism; UMP biosynthesis via de novo pathway; orotate from (S)-dihydroorotate (quinone route): step 1/1. Catalyzes the conversion of dihydroorotate to orotate with quinone as electron acceptor. This is Dihydroorotate dehydrogenase (quinone) from Pseudomonas paraeruginosa (strain DSM 24068 / PA7) (Pseudomonas aeruginosa (strain PA7)).